Here is a 197-residue protein sequence, read N- to C-terminus: Rac-like GTP-binding protein 6 (197 aa).

13–20 (GDGAVGKT) is a binding site for GTP. The Effector region motif lies at 35–43 (YVPTVFDNF). GTP is bound by residues 60-64 (DTAGQ) and 118-121 (TKLD). Position 194 is a cysteine methyl ester (Cys194). A lipid anchor (S-geranylgeranyl cysteine) is attached at Cys194. Residues 195 to 197 (SIL) constitute a propeptide, removed in mature form.

This sequence belongs to the small GTPase superfamily. Rho family.

Its subcellular location is the cytoplasm. The protein resides in the membrane. Its function is as follows. Inactive GDP-bound Rho GTPases reside in the cytosol, are found in a complex with Rho GDP-dissociation inhibitors (Rho GDIs), and are released from the GDI protein in order to translocate to membranes upon activation. This chain is Rac-like GTP-binding protein 6 (RAC6), found in Oryza sativa subsp. japonica (Rice).